The following is a 139-amino-acid chain: Maximins 4/H3 type 6 (139 aa).

A signal peptide spans 1 to 18 (MNFKYIVAVSFLIASAYA). Residues 19-43 (RSVQNDEQSLSQRDVLEEESLREIR) constitute a propeptide that is removed on maturation. Asn-70 bears the Asparagine amide mark. Residues 74–118 (TAEDHEVMKRLEAVMRDLDSLDHPEEASERETRGFNQDEIAKEKR) constitute a propeptide that is removed on maturation. Ile-138 bears the Isoleucine amide mark.

The protein belongs to the bombinin family. Expressed by the skin glands.

It is found in the secreted. Maximin-4 shows antibacterial activity against both Gram-positive and Gram-negative bacteria. It also shows antimicrobial activity against the fungus C.albicans, but not against A.flavus nor P.uticale. It has little hemolytic activity. It does not possess a significant cytotoxicity against tumor cell lines. It does not possess a significant anti-HIV activity. Its function is as follows. Maximin-H3 shows antibacterial activity against both Gram-positive and Gram-negative bacteria. It also shows antimicrobial activity against the fungus C.albicans. Shows strong hemolytic activity. The sequence is that of Maximins 4/H3 type 6 from Bombina maxima (Giant fire-bellied toad).